A 353-amino-acid chain; its full sequence is Protein RecA (353 aa).

64 to 71 (GPESSGKT) contacts ATP. The disordered stretch occupies residues 331–353 (LEEASAQKEEVPVEDKLFDDELE). Over residues 335 to 346 (SAQKEEVPVEDK) the composition is skewed to basic and acidic residues.

Belongs to the RecA family.

The protein resides in the cytoplasm. Functionally, can catalyze the hydrolysis of ATP in the presence of single-stranded DNA, the ATP-dependent uptake of single-stranded DNA by duplex DNA, and the ATP-dependent hybridization of homologous single-stranded DNAs. It interacts with LexA causing its activation and leading to its autocatalytic cleavage. The chain is Protein RecA from Macrococcus caseolyticus (strain JCSC5402) (Macrococcoides caseolyticum).